Reading from the N-terminus, the 773-residue chain is Probable dipeptidyl peptidase 4 (773 aa).

Residues methionine 1–alanine 18 form the signal peptide. N-linked (GlcNAc...) asparagine glycans are attached at residues asparagine 37, asparagine 80, asparagine 112, asparagine 220, asparagine 471, and asparagine 496. Serine 619 serves as the catalytic Charge relay system. The N-linked (GlcNAc...) asparagine glycan is linked to asparagine 671. Active-site charge relay system residues include aspartate 696 and histidine 731.

Belongs to the peptidase S9B family.

The protein localises to the secreted. The catalysed reaction is Release of an N-terminal dipeptide, Xaa-Yaa-|-Zaa-, from a polypeptide, preferentially when Yaa is Pro, provided Zaa is neither Pro nor hydroxyproline.. Its function is as follows. Extracellular dipeptidyl-peptidase which removes N-terminal dipeptides sequentially from polypeptides having unsubstituted N-termini provided that the penultimate residue is proline. This chain is Probable dipeptidyl peptidase 4 (dpp4), found in Emericella nidulans (strain FGSC A4 / ATCC 38163 / CBS 112.46 / NRRL 194 / M139) (Aspergillus nidulans).